A 154-amino-acid polypeptide reads, in one-letter code: Ribosomal RNA large subunit methyltransferase H (154 aa).

S-adenosyl-L-methionine-binding positions include L76, G103, and L122–L127.

The protein belongs to the RNA methyltransferase RlmH family. As to quaternary structure, homodimer.

It localises to the cytoplasm. It carries out the reaction pseudouridine(1915) in 23S rRNA + S-adenosyl-L-methionine = N(3)-methylpseudouridine(1915) in 23S rRNA + S-adenosyl-L-homocysteine + H(+). Functionally, specifically methylates the pseudouridine at position 1915 (m3Psi1915) in 23S rRNA. In Wolinella succinogenes (strain ATCC 29543 / DSM 1740 / CCUG 13145 / JCM 31913 / LMG 7466 / NCTC 11488 / FDC 602W) (Vibrio succinogenes), this protein is Ribosomal RNA large subunit methyltransferase H.